The chain runs to 297 residues: Probable porphobilinogen deaminase (297 aa).

Cys-233 bears the S-(dipyrrolylmethanemethyl)cysteine mark.

This sequence belongs to the HMBS family. It depends on dipyrromethane as a cofactor.

It carries out the reaction 4 porphobilinogen + H2O = hydroxymethylbilane + 4 NH4(+). It participates in porphyrin-containing compound metabolism; protoporphyrin-IX biosynthesis; coproporphyrinogen-III from 5-aminolevulinate: step 2/4. Functionally, tetrapolymerization of the monopyrrole PBG into the hydroxymethylbilane pre-uroporphyrinogen in several discrete steps. This is Probable porphobilinogen deaminase from Thermoplasma volcanium (strain ATCC 51530 / DSM 4299 / JCM 9571 / NBRC 15438 / GSS1).